Consider the following 97-residue polypeptide: MKKDFHFPSQSVSFKCASCSNSFTIESTLKQKEITIDICGKCHPFYIGELTKQTVHGRAEKLSGKFNAGKAFLENKTPKKAKGKTEEYTKHRSLNEL.

A disordered region spans residues 76–97; it reads KTPKKAKGKTEEYTKHRSLNEL. The span at 83-97 shows a compositional bias: basic and acidic residues; it reads GKTEEYTKHRSLNEL.

This sequence belongs to the bacterial ribosomal protein bL31 family. Type A subfamily. As to quaternary structure, part of the 50S ribosomal subunit.

Binds the 23S rRNA. The chain is Large ribosomal subunit protein bL31 from Mycoplasma pneumoniae (strain ATCC 29342 / M129 / Subtype 1) (Mycoplasmoides pneumoniae).